Consider the following 493-residue polypeptide: Ketol-acid reductoisomerase (NADP(+)) (493 aa).

Residues 14–208 enclose the KARI N-terminal Rossmann domain; sequence LDQLGRCRFM…GGDRAGVLES (195 aa). NADP(+)-binding positions include 45–48, arginine 68, arginine 76, serine 78, and 108–110; these read CGAQ and DKQ. Residue histidine 132 is part of the active site. Position 158 (glycine 158) interacts with NADP(+). 2 KARI C-terminal knotted domains span residues 209–345 and 346–486; these read SFVA…APKA and DGIK…MTDM. The Mg(2+) site is built by aspartate 217, glutamate 221, glutamate 390, and glutamate 394. Serine 415 contributes to the substrate binding site.

The protein belongs to the ketol-acid reductoisomerase family. Mg(2+) is required as a cofactor.

The enzyme catalyses (2R)-2,3-dihydroxy-3-methylbutanoate + NADP(+) = (2S)-2-acetolactate + NADPH + H(+). It catalyses the reaction (2R,3R)-2,3-dihydroxy-3-methylpentanoate + NADP(+) = (S)-2-ethyl-2-hydroxy-3-oxobutanoate + NADPH + H(+). The protein operates within amino-acid biosynthesis; L-isoleucine biosynthesis; L-isoleucine from 2-oxobutanoate: step 2/4. It participates in amino-acid biosynthesis; L-valine biosynthesis; L-valine from pyruvate: step 2/4. Its function is as follows. Involved in the biosynthesis of branched-chain amino acids (BCAA). Catalyzes an alkyl-migration followed by a ketol-acid reduction of (S)-2-acetolactate (S2AL) to yield (R)-2,3-dihydroxy-isovalerate. In the isomerase reaction, S2AL is rearranged via a Mg-dependent methyl migration to produce 3-hydroxy-3-methyl-2-ketobutyrate (HMKB). In the reductase reaction, this 2-ketoacid undergoes a metal-dependent reduction by NADPH to yield (R)-2,3-dihydroxy-isovalerate. The polypeptide is Ketol-acid reductoisomerase (NADP(+)) (Actinobacillus succinogenes (strain ATCC 55618 / DSM 22257 / CCUG 43843 / 130Z)).